Consider the following 899-residue polypeptide: Auxin response factor 25 (899 aa).

The interval 1–20 is disordered; that stretch reads MKLSPPASADMPQALPENDG. The TF-B3 DNA-binding region spans 132–234; it reads FCKTLTASDT…QLLLGIRRAN (103 aa). The segment covering 546–564 has biased composition (low complexity); that stretch reads RQHVLQEQSSQEMQQQLPS. Positions 546–586 are disordered; the sequence is RQHVLQEQSSQEMQQQLPSSDHHVADVASESGSAPQAQSSL. Over residues 575–586 the composition is skewed to polar residues; sequence ESGSAPQAQSSL. The PB1 domain occupies 766–850; sequence ATFVKVYKSG…WCIKILSPQE (85 aa).

It belongs to the ARF family. As to quaternary structure, homodimers and heterodimers. As to expression, expressed in roots, culms, leaves and young panicles.

Its subcellular location is the nucleus. Its function is as follows. Auxin response factors (ARFs) are transcriptional factors that bind specifically to the DNA sequence 5'-TGTCTC-3' found in the auxin-responsive promoter elements (AuxREs). The sequence is that of Auxin response factor 25 (ARF25) from Oryza sativa subsp. japonica (Rice).